We begin with the raw amino-acid sequence, 990 residues long: Presequence protease, mitochondrial (990 aa).

The N-terminal 56 residues, 1–56 (MLRFQRTVPRVAIRRLANVYSEGAVLHGYKVRRAQEIPEMRMAAVELEHEMTGARH), are a transit peptide targeting the mitochondrion. His-84 is a Zn(2+) binding site. The active-site Proton acceptor is Glu-87. His-88 is a Zn(2+) binding site. The active site involves Glu-160. Glu-185 provides a ligand contact to Zn(2+).

The protein belongs to the peptidase M16 family. PreP subfamily. Monomer and homodimer; homodimerization is induced by binding of the substrate. Zn(2+) serves as cofactor.

The protein localises to the mitochondrion intermembrane space. The protein resides in the mitochondrion matrix. Its function is as follows. Degrades mitochondrial transit peptides after their cleavage in the intermembrane space or in the matrix, and presequence peptides; clearance of these peptides is required to keep the presequence processing machinery running. Preferentially cleaves the N-terminal side of paired basic amino acid residues. Also degrades other unstructured peptides. May function as an ATP-dependent peptidase as opposed to a metalloendopeptidase. The chain is Presequence protease, mitochondrial (CYM1) from Eremothecium gossypii (strain ATCC 10895 / CBS 109.51 / FGSC 9923 / NRRL Y-1056) (Yeast).